The primary structure comprises 200 residues: Pyridoxal 5'-phosphate synthase subunit PdxT (200 aa).

Position 52 to 54 (52 to 54 (GES)) interacts with L-glutamine. C84 serves as the catalytic Nucleophile. Residues R116 and 145–146 (IR) each bind L-glutamine. Active-site charge relay system residues include H181 and E183.

The protein belongs to the glutaminase PdxT/SNO family. In the presence of PdxS, forms a dodecamer of heterodimers. Only shows activity in the heterodimer.

It carries out the reaction aldehydo-D-ribose 5-phosphate + D-glyceraldehyde 3-phosphate + L-glutamine = pyridoxal 5'-phosphate + L-glutamate + phosphate + 3 H2O + H(+). The catalysed reaction is L-glutamine + H2O = L-glutamate + NH4(+). The protein operates within cofactor biosynthesis; pyridoxal 5'-phosphate biosynthesis. In terms of biological role, catalyzes the hydrolysis of glutamine to glutamate and ammonia as part of the biosynthesis of pyridoxal 5'-phosphate. The resulting ammonia molecule is channeled to the active site of PdxS. The protein is Pyridoxal 5'-phosphate synthase subunit PdxT of Saccharolobus islandicus (strain Y.N.15.51 / Yellowstone #2) (Sulfolobus islandicus).